The chain runs to 578 residues: Arginine--tRNA ligase (578 aa).

The short motif at Pro-127–His-137 is the 'HIGH' region element.

This sequence belongs to the class-I aminoacyl-tRNA synthetase family. As to quaternary structure, monomer.

It is found in the cytoplasm. The catalysed reaction is tRNA(Arg) + L-arginine + ATP = L-arginyl-tRNA(Arg) + AMP + diphosphate. The chain is Arginine--tRNA ligase from Pseudomonas syringae pv. tomato (strain ATCC BAA-871 / DC3000).